A 404-amino-acid polypeptide reads, in one-letter code: Serine/threonine transporter SstT (404 aa).

A run of 8 helical transmembrane segments spans residues 10–30 (ILGG…ICLA), 53–73 (AIAP…KEVG), 81–101 (ILVM…ILSY), 140–160 (AITN…GIAL), 177–197 (AVSF…FGLV), 215–235 (LLAV…PLLV), 287–307 (IAIP…ITVL), and 329–349 (IVAS…LLLI).

The protein belongs to the dicarboxylate/amino acid:cation symporter (DAACS) (TC 2.A.23) family.

It is found in the cell inner membrane. It carries out the reaction L-serine(in) + Na(+)(in) = L-serine(out) + Na(+)(out). The catalysed reaction is L-threonine(in) + Na(+)(in) = L-threonine(out) + Na(+)(out). Its function is as follows. Involved in the import of serine and threonine into the cell, with the concomitant import of sodium (symport system). The sequence is that of Serine/threonine transporter SstT from Glaesserella parasuis serovar 5 (strain SH0165) (Haemophilus parasuis).